A 388-amino-acid polypeptide reads, in one-letter code: Serine/threonine-protein phosphatase sitA (388 aa).

Asp-67 and His-69 together coordinate Mn(2+). Residues 86–146 form a disordered region; the sequence is PDGSEAEAPK…SQRDRSSSSG (61 aa). 2 residues coordinate Mn(2+): Asp-161 and Asn-193. The active-site Proton donor is the His-194. Mn(2+) contacts are provided by His-243 and His-317.

It belongs to the PPP phosphatase family. PP-6 (PP-V) subfamily. Requires Mn(2+) as cofactor.

The catalysed reaction is O-phospho-L-threonyl-[protein] + H2O = L-threonyl-[protein] + phosphate. Its function is as follows. Protein phosphatase that acts as a modulator of pkcA/mpkA activity involved in the cell wall integrity pathway. Plays an important role in regulation of adhesion, cell wall integrity, biofilm formation, and virulence. The sequence is that of Serine/threonine-protein phosphatase sitA from Aspergillus fumigatus (strain ATCC MYA-4609 / CBS 101355 / FGSC A1100 / Af293) (Neosartorya fumigata).